The following is a 206-amino-acid chain: Small ribosomal subunit protein uS4 (206 aa).

An S4 RNA-binding domain is found at 96 to 156 (GRLDNVVYRM…EKSKKQARIK (61 aa)).

Belongs to the universal ribosomal protein uS4 family. Part of the 30S ribosomal subunit. Contacts protein S5. The interaction surface between S4 and S5 is involved in control of translational fidelity.

One of the primary rRNA binding proteins, it binds directly to 16S rRNA where it nucleates assembly of the body of the 30S subunit. Its function is as follows. With S5 and S12 plays an important role in translational accuracy. The chain is Small ribosomal subunit protein uS4 from Histophilus somni (strain 2336) (Haemophilus somnus).